An 88-amino-acid chain; its full sequence is Fe-S protein maturation auxiliary factor SufT (88 aa).

Belongs to the MIP18 family.

Its function is as follows. Involved in the maturation of iron-sulfur (Fe-S) proteins. May function as a Fe-S cluster carrier. Is required for S.aureus growth under conditions that impose a high demand for lipoic acid, likely via a role in the maturation of the lipoate synthase LipA. Is non-essential for growth in conditions that impose a low demand for lipoic acid or Fe-S clusters, such as fermentative growth. Also seems to be involved in the maturation of AcnA, LeuCD and IlvD proteins, that utilize Fe-S cluster cofactors, and its role increases under conditions of high-demand for Fe-S clusters (respiratory growth). Is not involved in the repair of Fe-S clusters damaged by reactive oxygen species or in the physical protection of Fe-S clusters from oxidants. Displays synergy with the Fe-S cluster carrier Nfu. This is Fe-S protein maturation auxiliary factor SufT from Staphylococcus aureus (strain USA300).